The chain runs to 118 residues: REPTOR-binding partner (118 aa).

Over residues 1-20 (MADMEIQSNKMSITEETQVQ) the composition is skewed to polar residues. The segment at 1–53 (MADMEIQSNKMSITEETQVQTRKECGKRGRKPGRKTSTEKLDMKAKLERSRQS) is disordered. The span at 36–53 (TSTEKLDMKAKLERSRQS) shows a compositional bias: basic and acidic residues. The tract at residues 40–77 (KLDMKAKLERSRQSARECRARKKLRYQYLEELVADREK) is basic motif. Positions 40–90 (KLDMKAKLERSRQSARECRARKKLRYQYLEELVADREKAVVALRTELERLI) constitute a bZIP domain. The leucine-zipper stretch occupies residues 82–89 (LRTELERL).

It belongs to the bZIP family. ATF subfamily. Homodimer. Interacts (via C-terminus) with REPTOR (via C-terminus).

It localises to the nucleus. The protein localises to the chromosome. In terms of biological role, transcriptional regulator that acts in the TORC1 signaling pathway to regulate energy homeostasis and promote survival during nutrient deprivation. Interacts with REPTOR to form a transcriptional activator complex that functions downstream of TORC1 to up-regulate the expression of most target genes induced by TORC1 inhibition. In the complex, acts to enhance the binding of the transcriptional activator REPTOR to the regulatory sequences of target genes. Under normal conditions TORC1 is active, inhibiting the formation of the REPTOR/REPTOR-BP complex by phosphorylating REPTOR and mediates its cytoplasmic retention by forming a docking site for 14-3-3 proteins. Upon TORC1 inhibition resulting from nutrient stress, REPTOR is recruited into the nucleus where it interacts with REPTOR-BP and together they maintain organismal metabolism by activating the expression of target stress response genes including those involved in glycogenesis and triglyceride biosynthesis. The complex also appears to negatively regulate some aspects of TORC1-dependent larval growth. The chain is REPTOR-binding partner from Drosophila melanogaster (Fruit fly).